Here is a 357-residue protein sequence, read N- to C-terminus: Sorbitol dehydrogenase (357 aa).

N-acetylalanine is present on A2. C45 provides a ligand contact to Zn(2+). Y51 is a binding site for substrate. Residues H70 and E71 each contribute to the Zn(2+) site. E156 contributes to the substrate binding site. NAD(+) is bound by residues I184, D204, and R209. 2 positions are modified to phosphoserine: S211 and S225. NAD(+) contacts are provided by residues 273 to 275 (VGL) and 297 to 299 (VFR). Substrate-binding residues include R299 and Y300.

It belongs to the zinc-containing alcohol dehydrogenase family. As to quaternary structure, homotetramer. Requires Zn(2+) as cofactor. As to expression, expressed in liver. Expressed in kidney and epithelial cells of both benign and malignant prostate tissue. Expressed in epididymis (at protein level).

It localises to the mitochondrion membrane. Its subcellular location is the cell projection. The protein localises to the cilium. The protein resides in the flagellum. It catalyses the reaction keto-D-fructose + NADH + H(+) = D-sorbitol + NAD(+). It carries out the reaction L-threitol + NAD(+) = L-erythrulose + NADH + H(+). The catalysed reaction is xylitol + NAD(+) = D-xylulose + NADH + H(+). The enzyme catalyses ribitol + NAD(+) = D-ribulose + NADH + H(+). It catalyses the reaction (R,R)-butane-2,3-diol + NAD(+) = (R)-acetoin + NADH + H(+). It carries out the reaction L-iditol + NAD(+) = keto-L-sorbose + NADH + H(+). With respect to regulation, inhibited by CP-166,572, an inhibitor that is competitive with fructose. Also competitively inhibited by phenanthroline and 4-methylpyrazole in vitro. In terms of biological role, polyol dehydrogenase that catalyzes the reversible NAD(+)-dependent oxidation of various sugar alcohols. Is mostly active with D-sorbitol (D-glucitol), L-threitol, xylitol and ribitol as substrates, leading to the C2-oxidized products D-fructose, L-erythrulose, D-xylulose, and D-ribulose, respectively. Is a key enzyme in the polyol pathway that interconverts glucose and fructose via sorbitol, which constitutes an important alternate route for glucose metabolism. The polyol pathway is believed to be involved in the etiology of diabetic complications, such as diabetic neuropathy and retinopathy, induced by hyperglycemia. May play a role in sperm motility by using sorbitol as an alternative energy source for sperm motility. May have a more general function in the metabolism of secondary alcohols since it also catalyzes the stereospecific oxidation of (2R,3R)-2,3-butanediol. To a lesser extent, can also oxidize L-arabinitol, galactitol and D-mannitol and glycerol in vitro. Oxidizes neither ethanol nor other primary alcohols. Cannot use NADP(+) as the electron acceptor. The protein is Sorbitol dehydrogenase (SORD) of Homo sapiens (Human).